A 135-amino-acid chain; its full sequence is MVLAASVAQEVANVPFAHEVAGLVQPVAEAQNVLGLIPMSHGLILAGILFAIGLCGVMVRRNFLFMLMSLEIMMNAAALAFVVAGSRWVDPDGQIMFIFILTLAAAEAAIGLAILLRFYHQRGHLDVDSANEMKG.

3 consecutive transmembrane segments (helical) span residues 33–53 (VLGLIPMSHGLILAGILFAIG), 63–83 (FLFMLMSLEIMMNAAALAFVV), and 95–115 (IMFIFILTLAAAEAAIGLAIL).

It belongs to the complex I subunit 4L family. As to quaternary structure, NDH-1 is composed of 14 different subunits. Subunits NuoA, H, J, K, L, M, N constitute the membrane sector of the complex.

It is found in the cell inner membrane. It carries out the reaction a quinone + NADH + 5 H(+)(in) = a quinol + NAD(+) + 4 H(+)(out). Functionally, NDH-1 shuttles electrons from NADH, via FMN and iron-sulfur (Fe-S) centers, to quinones in the respiratory chain. The immediate electron acceptor for the enzyme in this species is believed to be ubiquinone. Couples the redox reaction to proton translocation (for every two electrons transferred, four hydrogen ions are translocated across the cytoplasmic membrane), and thus conserves the redox energy in a proton gradient. This is NADH-quinone oxidoreductase subunit K from Psychrobacter arcticus (strain DSM 17307 / VKM B-2377 / 273-4).